Reading from the N-terminus, the 657-residue chain is Glycogen debranching enzyme (657 aa).

Asp-336 acts as the Nucleophile in catalysis. Residue Glu-371 is the Proton donor of the active site. The segment at 460-479 is disordered; sequence ANGEENRDGTNNNYSNNHGK.

The protein belongs to the glycosyl hydrolase 13 family.

The enzyme catalyses Hydrolysis of (1-&gt;6)-alpha-D-glucosidic linkages to branches with degrees of polymerization of three or four glucose residues in limit dextrin.. It participates in glycan degradation; glycogen degradation. In terms of biological role, removes maltotriose and maltotetraose chains that are attached by 1,6-alpha-linkage to the limit dextrin main chain, generating a debranched limit dextrin. The polypeptide is Glycogen debranching enzyme (Escherichia coli (strain SMS-3-5 / SECEC)).